A 194-amino-acid chain; its full sequence is Imidazoleglycerol-phosphate dehydratase (194 aa).

This sequence belongs to the imidazoleglycerol-phosphate dehydratase family.

It is found in the cytoplasm. The catalysed reaction is D-erythro-1-(imidazol-4-yl)glycerol 3-phosphate = 3-(imidazol-4-yl)-2-oxopropyl phosphate + H2O. The protein operates within amino-acid biosynthesis; L-histidine biosynthesis; L-histidine from 5-phospho-alpha-D-ribose 1-diphosphate: step 6/9. This is Imidazoleglycerol-phosphate dehydratase from Listeria innocua serovar 6a (strain ATCC BAA-680 / CLIP 11262).